A 930-amino-acid chain; its full sequence is Isoleucine--tRNA ligase (930 aa).

The short motif at 57 to 67 (PYANGNIHVGH) is the 'HIGH' region element. An L-isoleucyl-5'-AMP-binding site is contributed by Glu554. Residues 595–599 (KMSKS) carry the 'KMSKS' region motif. An ATP-binding site is contributed by Lys598. 4 residues coordinate Zn(2+): Cys888, Cys891, Cys908, and Cys911.

It belongs to the class-I aminoacyl-tRNA synthetase family. IleS type 1 subfamily. Monomer. Zn(2+) serves as cofactor.

It localises to the cytoplasm. The enzyme catalyses tRNA(Ile) + L-isoleucine + ATP = L-isoleucyl-tRNA(Ile) + AMP + diphosphate. Its function is as follows. Catalyzes the attachment of isoleucine to tRNA(Ile). As IleRS can inadvertently accommodate and process structurally similar amino acids such as valine, to avoid such errors it has two additional distinct tRNA(Ile)-dependent editing activities. One activity is designated as 'pretransfer' editing and involves the hydrolysis of activated Val-AMP. The other activity is designated 'posttransfer' editing and involves deacylation of mischarged Val-tRNA(Ile). The protein is Isoleucine--tRNA ligase of Streptococcus pneumoniae (strain JJA).